Reading from the N-terminus, the 308-residue chain is Serpentine receptor class V-1 (308 aa).

The next 7 membrane-spanning stretches (helical) occupy residues 15–35 (VSTA…YILF), 46–68 (PFFR…STFF), 88–108 (VVPI…IIFI), 135–155 (LLLI…STDF), 184–204 (AMVD…AIFI), 222–242 (LALS…CSLL), and 256–276 (TMWF…LLAL).

The protein belongs to the nematode receptor-like protein srv family.

The protein resides in the membrane. This Caenorhabditis elegans protein is Serpentine receptor class V-1 (srv-1).